The sequence spans 245 residues: MAKSKNHTTHNQSRKWHRNGIKKPRSQRYESLKGVDPKFLRNMRFAKKHNKKGLKKMQANNAKAMAARAEAIKALVKPKEVKPTIPKGVSRKLHRLAYIAHPKLGRRARARIARGLRLSRPQTKAKAKTEPQIKGKVKAQIKAQAQAQIKSKGKGKAQAETKPKAQAETKPKAQAQAKPKAQAQGKPKAQAQGKPKAQAQAKPKAQAQAKPKAQAQTKPKAQATPAAPVPAQAPPKGAQPPAKAP.

Positions 1-26 (MAKSKNHTTHNQSRKWHRNGIKKPRS) are enriched in basic residues. Disordered regions lie at residues 1 to 33 (MAKSKNHTTHNQSRKWHRNGIKKPRSQRYESLK) and 114 to 245 (RGLR…AKAP). Position 5 is an N6-methyllysine (Lys-5). Residue Ser-31 is modified to Phosphoserine. Lys-33 is subject to N6-acetyllysine. Positions 134-150 (KGKVKAQIKAQAQAQIK) are enriched in low complexity. Basic and acidic residues predominate over residues 157–171 (AQAETKPKAQAETKP). Low complexity-rich tracts occupy residues 172 to 226 (KAQA…ATPA) and 234 to 245 (PPKGAQPPAKAP).

Belongs to the eukaryotic ribosomal protein eL29 family. In terms of assembly, component of the large ribosomal subunit.

It is found in the cytoplasm. Component of the large ribosomal subunit. The ribosome is a large ribonucleoprotein complex responsible for the synthesis of proteins in the cell. The chain is Large ribosomal subunit protein eL29 (RPL29) from Oryctolagus cuniculus (Rabbit).